Here is a 52-residue protein sequence, read N- to C-terminus: Protein YabQ (52 aa).

Its function is as follows. Identified as a multicopy suppressor of the slow growth phenotype of an rsgA (yjeQ) deletion mutant. The sequence is that of Protein YabQ (yabQ) from Escherichia coli (strain K12).